A 358-amino-acid chain; its full sequence is Methionine aminopeptidase 2 (358 aa).

Position 109 (H109) interacts with substrate. A divalent metal cation contacts are provided by D130, D141, and H210. H218 contacts substrate. 2 residues coordinate a divalent metal cation: E243 and E339.

This sequence belongs to the peptidase M24A family. Methionine aminopeptidase eukaryotic type 2 subfamily. Requires Co(2+) as cofactor. Zn(2+) is required as a cofactor. Mn(2+) serves as cofactor. It depends on Fe(2+) as a cofactor.

It localises to the cytoplasm. The catalysed reaction is Release of N-terminal amino acids, preferentially methionine, from peptides and arylamides.. With respect to regulation, irreversibly inhibited by the fungal metabolite fumagillin and the fumagillin analog TNP470, antiangiogenic drugs. In terms of biological role, cotranslationally removes the N-terminal methionine from nascent proteins. The N-terminal methionine is often cleaved when the second residue in the primary sequence is small and uncharged (Met-Ala-, Cys, Gly, Pro, Ser, Thr, or Val). The polypeptide is Methionine aminopeptidase 2 (Encephalitozoon hellem (strain ATCC 50504) (Microsporidian parasite)).